A 138-amino-acid chain; its full sequence is Basic phospholipase A2 Pla2Vb (138 aa).

The N-terminal stretch at 1-16 (MRTLWIVAVWLMGVEG) is a signal peptide. 7 disulfides stabilise this stretch: Cys-42/Cys-131, Cys-44/Cys-60, Cys-59/Cys-111, Cys-65/Cys-138, Cys-66/Cys-104, Cys-73/Cys-97, and Cys-91/Cys-102. Ca(2+)-binding residues include Tyr-43, Gly-45, and Gly-47. His-63 is a catalytic residue. Asp-64 is a Ca(2+) binding site. The active site involves Asp-105.

The protein belongs to the phospholipase A2 family. Group II subfamily. D49 sub-subfamily. The cofactor is Ca(2+). As to expression, expressed by the venom gland.

The protein resides in the secreted. The catalysed reaction is a 1,2-diacyl-sn-glycero-3-phosphocholine + H2O = a 1-acyl-sn-glycero-3-phosphocholine + a fatty acid + H(+). Its function is as follows. Snake venom phospholipase A2 (PLA2) that exhibits medium anticoagulant effects by binding to factor Xa (F10) and inhibiting the prothrombinase activity (IC(50) is 90 nM). PLA2 catalyzes the calcium-dependent hydrolysis of the 2-acyl groups in 3-sn-phosphoglycerides. The sequence is that of Basic phospholipase A2 Pla2Vb from Vipera berus berus (Common viper).